We begin with the raw amino-acid sequence, 160 residues long: MTVTPRPTADLVDEIGPDVRSCDLQLRQYGGRTDFAGPITTVRCFQDNALLKSVLSEPGDGGVLVIDGDGSVHTALVGDVIAELGRSNGWSGLIINGAVRDASTLRTLDIGIKALGTNPRKSTKTGEGIRDEAVEFGGVVFTPGDIAYSDDDGIVVIAAG.

Residues 78 to 81 and Arg100 contribute to the substrate site; that span reads GDVI. Asp101 lines the a divalent metal cation pocket.

This sequence belongs to the class II aldolase/RraA-like family. As to quaternary structure, homotrimer. It depends on a divalent metal cation as a cofactor.

It catalyses the reaction 4-hydroxy-4-methyl-2-oxoglutarate = 2 pyruvate. The enzyme catalyses oxaloacetate + H(+) = pyruvate + CO2. Its function is as follows. Catalyzes the aldol cleavage of 4-hydroxy-4-methyl-2-oxoglutarate (HMG) into 2 molecules of pyruvate. Also contains a secondary oxaloacetate (OAA) decarboxylase activity due to the common pyruvate enolate transition state formed following C-C bond cleavage in the retro-aldol and decarboxylation reactions. This chain is Putative 4-hydroxy-4-methyl-2-oxoglutarate aldolase, found in Mycolicibacterium vanbaalenii (strain DSM 7251 / JCM 13017 / BCRC 16820 / KCTC 9966 / NRRL B-24157 / PYR-1) (Mycobacterium vanbaalenii).